The primary structure comprises 442 residues: DNA topoisomerase 6 subunit A3 (442 aa).

The segment at 1–34 is disordered; it reads MSEKKRRGGAGAGAASGSASKKPRVSTAASYAES. A Topo IIA-type catalytic domain is found at 91-224; that stretch reads QDSASVTSRI…LHVVASEKGV (134 aa). Tyr-185 acts as the O-(5'-phospho-DNA)-tyrosine intermediate in catalysis. 2 residues coordinate Mg(2+): Glu-271 and Asp-323.

It belongs to the TOP6A family. Homodimer. Heterotetramer of two TOP6A and two TOP6B subunits. Interacts with TOP6B. Requires Mg(2+) as cofactor. In terms of tissue distribution, highly expressed in flowers before pollination. Expressed in roots and shoots.

It localises to the nucleus. It carries out the reaction ATP-dependent breakage, passage and rejoining of double-stranded DNA.. Functionally, component of the DNA topoisomerase VI involved in chromatin organization and progression of endoreduplication cycles. Relaxes both positive and negative superturns and exhibits a strong decatenase activity. May be involved in cell proliferation and stress tolerance. The sequence is that of DNA topoisomerase 6 subunit A3 from Oryza sativa subsp. indica (Rice).